The sequence spans 377 residues: Chaperone protein DnaJ (377 aa).

Residues 5-70 enclose the J domain; it reads DYYEILGVAK…QKRAAYDQFG (66 aa). The CR-type zinc finger occupies 130-208; it reads GTEVKIRVPS…CHGQGRVEEH (79 aa). Zn(2+)-binding residues include Cys143, Cys146, Cys160, Cys163, Cys182, Cys185, Cys196, and Cys199. CXXCXGXG motif repeat units lie at residues 143 to 150, 160 to 167, 182 to 189, and 196 to 203; these read CGECHGSG, CGTCGGVG, CPRCHGTG, and CKACHGQG.

It belongs to the DnaJ family. Homodimer. It depends on Zn(2+) as a cofactor.

The protein localises to the cytoplasm. Its function is as follows. Participates actively in the response to hyperosmotic and heat shock by preventing the aggregation of stress-denatured proteins and by disaggregating proteins, also in an autonomous, DnaK-independent fashion. Unfolded proteins bind initially to DnaJ; upon interaction with the DnaJ-bound protein, DnaK hydrolyzes its bound ATP, resulting in the formation of a stable complex. GrpE releases ADP from DnaK; ATP binding to DnaK triggers the release of the substrate protein, thus completing the reaction cycle. Several rounds of ATP-dependent interactions between DnaJ, DnaK and GrpE are required for fully efficient folding. Also involved, together with DnaK and GrpE, in the DNA replication of plasmids through activation of initiation proteins. This Thioalkalivibrio sulfidiphilus (strain HL-EbGR7) protein is Chaperone protein DnaJ.